The chain runs to 364 residues: Mitogen-activated protein kinase 11 (364 aa).

The Protein kinase domain occupies 24–308; the sequence is LQGLRPVGSG…AAEALAHAYF (285 aa). Residues 30 to 38 and lysine 53 each bind ATP; that span reads VGSGAYGSV. Glutamate 71 lines the nilotinib pocket. Residue aspartate 168 is the Proton acceptor of the active site. Threonine 180 carries the phosphothreonine; by MAP2K3, MAP2K4 and MAP2K6 modification. The TXY signature appears at 180–182; that stretch reads TGY. Tyrosine 182 bears the Phosphotyrosine; by MAP2K3, MAP2K4 and MAP2K6 mark. Residues 312 to 331 are disordered; the sequence is HDPDDEPEAEPYDESVEAKE. Residues 314–326 show a composition bias toward acidic residues; sequence PDDEPEAEPYDES. Residue tyrosine 323 is modified to Phosphotyrosine; by ZAP70.

This sequence belongs to the protein kinase superfamily. CMGC Ser/Thr protein kinase family. MAP kinase subfamily. Interacts with HDAC3 and DUSP16. Requires Mg(2+) as cofactor. In terms of processing, dually phosphorylated on Thr-180 and Tyr-182 by MAP2K3/MKK3, MAP2K4/MKK4 and MAP2K6/MKK6, which activates the enzyme.

It localises to the cytoplasm. The protein localises to the nucleus. The enzyme catalyses L-seryl-[protein] + ATP = O-phospho-L-seryl-[protein] + ADP + H(+). The catalysed reaction is L-threonyl-[protein] + ATP = O-phospho-L-threonyl-[protein] + ADP + H(+). With respect to regulation, activated by phosphorylation on threonine and tyrosine by MAP2K3/MKK3, MAP2K4/MKK4 and MAP2K6/MKK6. MAP2K3/MKK3 and MAP2K6/MKK6 are both essential for the activation of MAPK11 induced by environmental stress. HDAC3 interacts directly and selectively with MAPK11 to repress ATF2 transcriptional activity, and regulate TNF gene expression in LPS-stimulated cells. Inhibited by SB203580 and pyridinyl-imidazole related compounds. Serine/threonine kinase which acts as an essential component of the MAP kinase signal transduction pathway. MAPK11 is one of the four p38 MAPKs which play an important role in the cascades of cellular responses evoked by extracellular stimuli such as pro-inflammatory cytokines or physical stress leading to direct activation of transcription factors. Accordingly, p38 MAPKs phosphorylate a broad range of proteins and it has been estimated that they may have approximately 200 to 300 substrates each. MAPK11 functions are mostly redundant with those of MAPK14. Some of the targets are downstream kinases which are activated through phosphorylation and further phosphorylate additional targets. RPS6KA5/MSK1 and RPS6KA4/MSK2 can directly phosphorylate and activate transcription factors such as CREB1, ATF1, the NF-kappa-B isoform RELA/NFKB3, STAT1 and STAT3, but can also phosphorylate histone H3 and the nucleosomal protein HMGN1. RPS6KA5/MSK1 and RPS6KA4/MSK2 play important roles in the rapid induction of immediate-early genes in response to stress or mitogenic stimuli, either by inducing chromatin remodeling or by recruiting the transcription machinery. On the other hand, two other kinase targets, MAPKAPK2/MK2 and MAPKAPK3/MK3, participate in the control of gene expression mostly at the post-transcriptional level, by phosphorylating ZFP36 (tristetraprolin) and ELAVL1, and by regulating EEF2K, which is important for the elongation of mRNA during translation. MKNK1/MNK1 and MKNK2/MNK2, two other kinases activated by p38 MAPKs, regulate protein synthesis by phosphorylating the initiation factor EIF4E2. In the cytoplasm, the p38 MAPK pathway is an important regulator of protein turnover. For example, CFLAR is an inhibitor of TNF-induced apoptosis whose proteasome-mediated degradation is regulated by p38 MAPK phosphorylation. Ectodomain shedding of transmembrane proteins is regulated by p38 MAPKs as well. In response to inflammatory stimuli, p38 MAPKs phosphorylate the membrane-associated metalloprotease ADAM17. Such phosphorylation is required for ADAM17-mediated ectodomain shedding of TGF-alpha family ligands, which results in the activation of EGFR signaling and cell proliferation. Additional examples of p38 MAPK substrates are the FGFR1. FGFR1 can be translocated from the extracellular space into the cytosol and nucleus of target cells, and regulates processes such as rRNA synthesis and cell growth. FGFR1 translocation requires p38 MAPK activation. In the nucleus, many transcription factors are phosphorylated and activated by p38 MAPKs in response to different stimuli. Classical examples include ATF1, ATF2, ATF6, ELK1, PTPRH, DDIT3, TP53/p53 and MEF2C and MEF2A. The p38 MAPKs are emerging as important modulators of gene expression by regulating chromatin modifiers and remodelers. The promoters of several genes involved in the inflammatory response, such as IL6, IL8 and IL12B, display a p38 MAPK-dependent enrichment of histone H3 phosphorylation on 'Ser-10' (H3S10ph) in LPS-stimulated myeloid cells. This phosphorylation enhances the accessibility of the cryptic NF-kappa-B-binding sites marking promoters for increased NF-kappa-B recruitment. Phosphorylates methyltransferase DOT1L on 'Ser-834', 'Thr-900', 'Ser-902', 'Thr-984', 'Ser-1001', 'Ser-1009' and 'Ser-1104'. This chain is Mitogen-activated protein kinase 11 (Mapk11), found in Mus musculus (Mouse).